Consider the following 1245-residue polypeptide: MNRGFFNMLGRRPFPAPTAMWRPRRRRQAAPMPARNGLASQIQQLTTAVSALVIGQATRPQPPRPRPPPRQKKQAPKQPPKPKKPKTQEKKKKQPAKPKPGKRQRMALKLEADRLFDVKNEDGDVIGHALAMEGKVMKPLHVKGTIDHPVLSKLKFTKSSAYDMEFAQLPVNMRSEAFTYTSEHPEGFYNWHHGAVQYSGGRFTIPRGVGGRGDSGRPIMDNSGRVVAIVLGGADEGTRTALSVVTWNSKGKTIKTTPEGTEEWSAAPLVTAMCLLGNVSFPCDRPPTCYTREPSRALDILEENVNHEAYDTLLNAILRCGSSGRSKRSVIDDFTLTSPYLGTCSYCHHTVPCFSPVKIEQVWDEADDNTIRIQTSAQFGYDQSGAASANKYRYMSLKQDHTVKEGTMDDIKISTSGPCRRLSYKGYFLLAKCPPGDSVTVSIVSSNSATSCTLARKIKPKFVGREKYDLPPVHGKKIPCTVYDRLKETTAGYITMHRPRPHAYTSYLEESSGKVYAKPPSGKNITYECKCGDYKTGTVSTRTEITGCTAIKQCVAYKSDQTKWVFNSPDLIRHDDHTAQGKLHLPFKLIPSTCMVPVAHAPNVIHGFKHISLQLDTDHLTLLTTRRLGANPEPTTEWIVGKTVRNFTVDRDGLEYIWGNHEPVRVYAQESAPGDPHGWPHEIVQHYYHRHPVYTILAVASATVAMMIGVTVAVLCACKARRECLTPYALAPNAVIPTSLALLCCVRSANAETFTETMSYLWSNSQPFFWVQLCIPLAAFIVLMRCCSCCLPFLVVAGAYLAKVDAYEHATTVPNVPQIPYKALVERAGYAPLNLEITVMSSEVLPSTNQEYITCKFTTVVPSPKIKCCGSLECQPAAHADYTCKVFGGVYPFMWGGAQCFCDSENSQMSEAYVELSADCASDHAQAIKVHTAAMKVGLRIVYGNTTSFLDVYVNGVTPGTSKDLKVIAGPISASFTPFDHKVVIHRGLVYNYDFPEYGAMKPGAFGDIQATSLTSKDLIASTDIRLLKPSAKNVHVPYTQASSGFEMWKNNSGRPLQETAPFGCKIAVNPLRAVDCSYGNIPISIDIPNAAFIRTSDAPLVSTVKCEVSECTYSADFGGMATLQYVSDREGQCPVHSHSSTATLQESTVHVLEKGAVTVHFSTASPQANFIVSLCGKKTTCNAECKPPADHIVSTPHKNDQEFQAAISKTSWSWLFALFGGASSLLIIGLMIFACSMMLTSTRR.

A disordered region spans residues methionine 1 to methionine 106. Positions glycine 37–arginine 70 are host transcription inhibition. Residues leucine 38–valine 49 show a composition bias toward polar residues. Positions proline 63–proline 100 match the Nuclear localization signal motif. Over residues proline 67 to methionine 106 the composition is skewed to basic residues. Positions lysine 86–leucine 115 are binding to the viral RNA. The ribosome-binding stretch occupies residues proline 100–arginine 114. Positions arginine 114–tryptophan 264 constitute a Peptidase S3 domain. Histidine 141 serves as the catalytic Charge relay system. The Nuclear export signal motif lies at isoleucine 146–phenylalanine 156. Positions threonine 157–tyrosine 162 are interaction with spike glycoprotein E2. Catalysis depends on aspartate 163, which acts as the Charge relay system. The interval proline 185–alanine 195 is dimerization of the capsid protein. Serine 215 serves as the catalytic Charge relay system. Residues aspartate 221 to arginine 225 are dimerization of the capsid protein. The segment at serine 249–threonine 253 is interaction with spike glycoprotein E2. The interval serine 265–valine 279 is functions as an uncleaved signal peptide for the precursor of protein E3/E2. N-linked (GlcNAc...) asparagine; by host glycosylation is present at asparagine 278. 4 disulfides stabilise this stretch: cysteine 283–cysteine 289, cysteine 480–cysteine 594, cysteine 529–cysteine 554, and cysteine 531–cysteine 548. Over serine 329–arginine 690 the chain is Extracellular. Asparagine 524 carries an N-linked (GlcNAc...) asparagine; by host glycan. Asparagine 646 is a glycosylation site (N-linked (GlcNAc...) asparagine; by host). A coiled-coil region spans residues glutamate 682–leucine 730. The helical transmembrane segment at histidine 691–cysteine 718 threads the bilayer. The interaction with the capsid protein stretch occupies residues lysine 719–glutamate 723. Topologically, residues lysine 719 to alanine 751 are cytoplasmic. Residues cysteine 724, cysteine 744, and cysteine 745 are each lipidated (S-palmitoyl cysteine; by host). Residues cysteine 724 and cysteine 745 are joined by a disulfide bond. At glutamate 752–serine 763 the chain is on the extracellular side. The helical transmembrane segment at asparagine 764 to methionine 784 threads the bilayer. Arginine 785 is a topological domain (cytoplasmic). A helical transmembrane segment spans residues cysteine 786–alanine 806. Residues tyrosine 807–serine 1214 lie on the Extracellular side of the membrane. Intrachain disulfides connect cysteine 855–cysteine 920, cysteine 868–cysteine 900, cysteine 869–cysteine 902, and cysteine 874–cysteine 884. The E1 fusion peptide loop stretch occupies residues valine 890–serine 907. N-linked (GlcNAc...) asparagine; by host glycans are attached at residues asparagine 945 and asparagine 1051. Intrachain disulfides connect cysteine 1065-cysteine 1077, cysteine 1107-cysteine 1182, cysteine 1112-cysteine 1186, and cysteine 1134-cysteine 1176. Residues threonine 1196–arginine 1245 are a coiled coil. The helical transmembrane segment at tryptophan 1215–methionine 1239 threads the bilayer. The Cytoplasmic segment spans residues leucine 1240 to arginine 1245.

It belongs to the alphavirus structural polyprotein family. As to quaternary structure, homomultimer. Interacts with host karyopherin KPNA4; this interaction allows the nuclear import of the viral capsid protein. Interacts with spike glycoprotein E2. Interacts with host IRAK1; the interaction leads to inhibition of IRAK1-dependent signaling. In terms of assembly, the precursor of protein E3/E2 and E1 form a heterodimer shortly after synthesis. The precursor of protein E3/E2 and E1 form a heterodimer shortly after synthesis. Processing of the precursor of protein E3/E2 into E2 and E3 results in a heterodimer of the spike glycoproteins E2 and E1. Spike at virion surface are constituted of a trimer of E2-E1 heterodimers. After target cell attachment and endocytosis, E1 change conformation to form homotrimers. E2-E1 heterodimers interact with host VLDLR or LRP8/APOER2 to mediate viral entry. Interacts with 6K protein. As to quaternary structure, interacts with spike glycoprotein E1. Processing of the precursor of protein E3/E2 into E2 and E3 results in a heterodimer of the spike glycoproteins E2 and E1. Spike at virion surface are constituted of a trimer of E2-E1 heterodimers. E2-E1 heterodimers interact with host VLDLR or LRP8/APOER2 to mediate viral entry. Interacts with 6K protein. Interacts with the capsid protein. In terms of assembly, oligomer. Interacts with spike glycoprotein E1. Interacts with spike glycoprotein E2. Specific enzymatic cleavages in vivo yield mature proteins. Capsid protein is auto-cleaved during polyprotein translation, unmasking a signal peptide at the N-terminus of the precursor of E3/E2. The remaining polyprotein is then targeted to the host endoplasmic reticulum, where host signal peptidase cleaves it into pE2, 6K and E1 proteins. pE2 is further processed to mature E3 and E2 by host furin in trans-Golgi vesicle. Post-translationally, palmitoylated via thioester bonds. These palmitoylations may induce disruption of the C-terminus transmembrane. This would result in the reorientation of E2 C-terminus from lumenal to cytoplasmic side. In terms of processing, N-glycosylated. Palmitoylated via thioester bonds.

It localises to the virion. Its subcellular location is the host cytoplasm. The protein localises to the host cell membrane. It is found in the host nucleus. The protein resides in the virion membrane. It localises to the host Golgi apparatus. Its subcellular location is the host trans-Golgi network. The protein localises to the host endoplasmic reticulum. The enzyme catalyses Autocatalytic release of the core protein from the N-terminus of the togavirus structural polyprotein by hydrolysis of a -Trp-|-Ser- bond.. The channel activity is blocked by 5-N, N-Hexamethylene amiloride. Its function is as follows. Forms an icosahedral capsid with a T=4 symmetry composed of 240 copies of the capsid protein surrounded by a lipid membrane through which penetrate 80 spikes composed of trimers of E1-E2 heterodimers. The capsid protein binds to the viral RNA genome at a site adjacent to a ribosome binding site for viral genome translation following genome release. Possesses a protease activity that results in its autocatalytic cleavage from the nascent structural protein. Following its self-cleavage, the capsid protein transiently associates with ribosomes, and within several minutes the protein binds to viral RNA and rapidly assembles into icosahedric core particles. The resulting nucleocapsid eventually associates with the cytoplasmic domain of the spike glycoprotein E2 at the cell membrane, leading to budding and formation of mature virions. In case of infection, new virions attach to target cells and after clathrin-mediated endocytosis their membrane fuses with the host endosomal membrane. This leads to the release of the nucleocapsid into the cytoplasm, followed by an uncoating event necessary for the genomic RNA to become accessible. The uncoating might be triggered by the interaction of capsid proteins with ribosomes. Binding of ribosomes would release the genomic RNA since the same region is genomic RNA-binding and ribosome-binding. Specifically inhibits interleukin-1 receptor-associated kinase 1/IRAK1-dependent signaling during viral entry, representing a means by which the alphaviruses may evade innate immune detection and activation prior to viral gene expression. In terms of biological role, provides the signal sequence for the translocation of the precursor of protein E3/E2 to the host endoplasmic reticulum. Furin-cleaved E3 remains associated with spike glycoprotein E1 and mediates pH protection of the latter during the transport via the secretory pathway. After virion release from the host cell, the assembly protein E3 is gradually released in the extracellular space. Functionally, plays a role in viral attachment to target host cell, by binding to the cell receptors VLDLR or LRP8/APOER2. Synthesized as a pE2 precursor which is processed by furin at the cell membrane just before virion budding, giving rise to E2-E1 heterodimer. The pE2-E1 heterodimer is stable, whereas E2-E1 is unstable and dissociate at low pH. pE2 is processed at the last step, presumably to avoid E1 fusion activation before its final export to cell surface. E2 C-terminus contains a transitory transmembrane that would be disrupted by palmitoylation, resulting in reorientation of the C-terminal tail from lumenal to cytoplasmic side. This step is critical since E2 C-terminus is involved in budding by interacting with capsid proteins. This release of E2 C-terminus in cytoplasm occurs lately in protein export, and precludes premature assembly of particles at the endoplasmic reticulum membrane. Acts as a viroporin that participates in virus glycoprotein processing and transport to the plasma membrane, cell permeabilization and budding of viral particles. Disrupts the calcium homeostasis of the cell, probably at the endoplasmic reticulum level resulting in the increased levels of cytoplasmic calcium. Because of its lipophilic properties, the 6K protein is postulated to influence the selection of lipids that interact with the transmembrane domains of the glycoproteins, which, in turn, affects the deformability of the bilayer required for the extreme curvature that occurs as budding proceeds. Present in low amount in virions, about 3% compared to viral glycoproteins. Its function is as follows. Class II viral fusion protein. Fusion activity is inactive as long as E1 is bound to E2 in mature virion. After virus attachment to target cell via host VLDLR or LRP8/APOER2 and endocytosis, acidification of the endosome induces dissociation of E1/E2 heterodimer and concomitant trimerization of the E1 subunits. This E1 trimer is fusion active, and promotes release of viral nucleocapsid in cytoplasm after endosome and viral membrane fusion. Efficient fusion requires the presence of cholesterol and sphingolipid in the target membrane. In Acrocephalus scirpaceus (Eurasian reed-warbler), this protein is Structural polyprotein.